Consider the following 155-residue polypeptide: Small ribosomal subunit protein uS7c (155 aa).

This sequence belongs to the universal ribosomal protein uS7 family. In terms of assembly, part of the 30S ribosomal subunit.

It is found in the plastid. Its subcellular location is the chloroplast. Functionally, one of the primary rRNA binding proteins, it binds directly to 16S rRNA where it nucleates assembly of the head domain of the 30S subunit. This Chaetosphaeridium globosum (Charophycean green alga) protein is Small ribosomal subunit protein uS7c (rps7).